A 616-amino-acid polypeptide reads, in one-letter code: Homeodomain-interacting protein kinase 4 (616 aa).

The 337-residue stretch at 11–347 (YDIIEVLGKG…PSAALRHPFV (337 aa)) folds into the Protein kinase domain. ATP is bound by residues 17–25 (LGKGTFGEV) and Lys40. Asp136 serves as the catalytic Proton acceptor. Residues 487–616 (HKARKAPAGS…SFLQHVGGHH (130 aa)) form a disordered region. Positions 497–512 (KSDSNFSNLIRLSQAS) are enriched in polar residues. Ser512 is subject to Phosphoserine. The span at 542-560 (REGDGPGIKDRPMDAERPG) shows a compositional bias: basic and acidic residues.

It belongs to the protein kinase superfamily. CMGC Ser/Thr protein kinase family. HIPK subfamily. Post-translationally, autophosphorylated. As to expression, expressed at moderate levels in lung and white adipose tissues and weakly in brain and liver.

The protein localises to the cytoplasm. It catalyses the reaction L-seryl-[protein] + ATP = O-phospho-L-seryl-[protein] + ADP + H(+). The enzyme catalyses L-threonyl-[protein] + ATP = O-phospho-L-threonyl-[protein] + ADP + H(+). Its function is as follows. Protein kinase that phosphorylates murine TP53 at Ser-9, and thus induces TP53 repression of BIRC5 promoter. May act as a corepressor of transcription factors (Potential). This Mus musculus (Mouse) protein is Homeodomain-interacting protein kinase 4 (Hipk4).